The sequence spans 127 residues: Insulin-like growth factor 3.L (127 aa).

A signal peptide spans methionine 1 to alanine 49. Residues alanine 49–valine 80 form a b region. Intrachain disulfides connect cysteine 61–cysteine 99, cysteine 73–cysteine 112, and cysteine 98–cysteine 103. The segment at serine 81–proline 92 is c. The tract at residues glycine 93–alanine 113 is a. The segment at alanine 114 to glycine 121 is d. Residues arginine 122 to serine 127 constitute a propeptide, e peptide.

This sequence belongs to the insulin family.

It localises to the secreted. Its function is as follows. The insulin-like growth factors, isolated from plasma, are structurally and functionally related to insulin but have a much higher growth-promoting activity. Promotes anterior neural development. This is Insulin-like growth factor 3.L from Xenopus laevis (African clawed frog).